Here is a 970-residue protein sequence, read N- to C-terminus: Bifunctional glutamine synthetase adenylyltransferase/adenylyl-removing enzyme (970 aa).

Residues 1 to 454 (MNSLPPRPSL…HFQQVFAAPQ (454 aa)) form an adenylyl removase region. Positions 468–970 (QAVLASIWAG…WRRVMEEGKA (503 aa)) are adenylyl transferase.

The protein belongs to the GlnE family. Requires Mg(2+) as cofactor.

The catalysed reaction is [glutamine synthetase]-O(4)-(5'-adenylyl)-L-tyrosine + phosphate = [glutamine synthetase]-L-tyrosine + ADP. The enzyme catalyses [glutamine synthetase]-L-tyrosine + ATP = [glutamine synthetase]-O(4)-(5'-adenylyl)-L-tyrosine + diphosphate. Involved in the regulation of glutamine synthetase GlnA, a key enzyme in the process to assimilate ammonia. When cellular nitrogen levels are high, the C-terminal adenylyl transferase (AT) inactivates GlnA by covalent transfer of an adenylyl group from ATP to specific tyrosine residue of GlnA, thus reducing its activity. Conversely, when nitrogen levels are low, the N-terminal adenylyl removase (AR) activates GlnA by removing the adenylyl group by phosphorolysis, increasing its activity. The regulatory region of GlnE binds the signal transduction protein PII (GlnB) which indicates the nitrogen status of the cell. The polypeptide is Bifunctional glutamine synthetase adenylyltransferase/adenylyl-removing enzyme (Thioalkalivibrio sulfidiphilus (strain HL-EbGR7)).